Here is a 182-residue protein sequence, read N- to C-terminus: Ribosome maturation factor RimM (182 aa).

Positions 103 to 182 constitute a PRC barrel domain; that stretch reads EDEFYWRELF…RIEVDWDPGF (80 aa).

It belongs to the RimM family. In terms of assembly, binds ribosomal protein uS19.

The protein resides in the cytoplasm. Its function is as follows. An accessory protein needed during the final step in the assembly of 30S ribosomal subunit, possibly for assembly of the head region. Essential for efficient processing of 16S rRNA. May be needed both before and after RbfA during the maturation of 16S rRNA. It has affinity for free ribosomal 30S subunits but not for 70S ribosomes. This is Ribosome maturation factor RimM from Vibrio vulnificus (strain CMCP6).